We begin with the raw amino-acid sequence, 160 residues long: Arsenate reductase 2.1 (160 aa).

In terms of domain architecture, Rhodanese spans serine 42–arginine 143. Residue cysteine 94 is the Cysteine persulfide intermediate of the active site.

The enzyme catalyses [glutaredoxin]-dithiol + arsenate + glutathione + H(+) = glutathionyl-S-S-[glutaredoxin] + arsenite + H2O. Possesses arsenate reductase activity in vitro. Catalyzes the reduction of arsenate [As(V)] to arsenite [As(III)]. May play a role in arsenic retention in roots. Functionally, possesses phosphatase activity towards p-nitrophenyl phosphate in vitro. The sequence is that of Arsenate reductase 2.1 (ACR2.1) from Oryza sativa subsp. japonica (Rice).